The following is a 188-amino-acid chain: Trafficking protein particle complex subunit 5 (188 aa).

It belongs to the TRAPP small subunits family. BET3 subfamily. As to quaternary structure, part of the multisubunit TRAPP (transport protein particle) complex.

The protein resides in the golgi apparatus. It localises to the cis-Golgi network. Its subcellular location is the endoplasmic reticulum. Its function is as follows. May play a role in vesicular transport from endoplasmic reticulum to Golgi. This Gallus gallus (Chicken) protein is Trafficking protein particle complex subunit 5 (TRAPPC5).